A 240-amino-acid polypeptide reads, in one-letter code: RNA-binding protein pno1 (240 aa).

Positions 1-15 (MEAENIRADAFEPAK) are enriched in basic and acidic residues. Positions 1-61 (MEAENIRADA…APPKAKRARS (61 aa)) are disordered. In terms of domain architecture, KH spans 164 to 213 (QSRAIGRLAGKGGRTKFTIENVTKTRIVLADSKIHILGSYQNIQLARRAV).

This sequence belongs to the PNO1 family.

Its subcellular location is the nucleus. The protein localises to the nucleolus. The sequence is that of RNA-binding protein pno1 (l(1)G0004) from Drosophila melanogaster (Fruit fly).